Consider the following 123-residue polypeptide: Large ribosomal subunit protein bL12 (123 aa).

This sequence belongs to the bacterial ribosomal protein bL12 family. As to quaternary structure, homodimer. Part of the ribosomal stalk of the 50S ribosomal subunit. Forms a multimeric L10(L12)X complex, where L10 forms an elongated spine to which 2 to 4 L12 dimers bind in a sequential fashion. Binds GTP-bound translation factors.

Its function is as follows. Forms part of the ribosomal stalk which helps the ribosome interact with GTP-bound translation factors. Is thus essential for accurate translation. This is Large ribosomal subunit protein bL12 from Dehalococcoides mccartyi (strain ATCC BAA-2100 / JCM 16839 / KCTC 5957 / BAV1).